The following is a 469-amino-acid chain: 3-isopropylmalate dehydratase large subunit (469 aa).

Positions 349, 410, and 413 each coordinate [4Fe-4S] cluster.

Belongs to the aconitase/IPM isomerase family. LeuC type 1 subfamily. As to quaternary structure, heterodimer of LeuC and LeuD. It depends on [4Fe-4S] cluster as a cofactor.

It catalyses the reaction (2R,3S)-3-isopropylmalate = (2S)-2-isopropylmalate. It functions in the pathway amino-acid biosynthesis; L-leucine biosynthesis; L-leucine from 3-methyl-2-oxobutanoate: step 2/4. Catalyzes the isomerization between 2-isopropylmalate and 3-isopropylmalate, via the formation of 2-isopropylmaleate. This is 3-isopropylmalate dehydratase large subunit from Neisseria gonorrhoeae (strain ATCC 700825 / FA 1090).